We begin with the raw amino-acid sequence, 412 residues long: O-acetyl-L-homoserine sulfhydrylase 2 (412 aa).

Lys-202 is subject to N6-(pyridoxal phosphate)lysine.

Belongs to the trans-sulfuration enzymes family. As to quaternary structure, homotetramer. Pyridoxal 5'-phosphate serves as cofactor.

The enzyme catalyses O-acetyl-L-homoserine + hydrogen sulfide = L-homocysteine + acetate. Its activity is regulated as follows. Inhibited by the carbonyl reagents hydroxylamine and phenylhydrazine. Also inhibited by methionine and propargylglycine. Functionally, catalyzes the conversion of O-acetyl-L-homoserine (OAH) into homocysteine in the methionine biosynthesis pathway. Has weak activity with O-acetyl-L-serine, O-phospho-L-serine, L-serine, O-succinyl-L-homoserine and L-homoserine. Shows a very low CTT gamma-synthase activity. The chain is O-acetyl-L-homoserine sulfhydrylase 2 from Thermus thermophilus (strain ATCC 27634 / DSM 579 / HB8).